We begin with the raw amino-acid sequence, 191 residues long: ECF RNA polymerase sigma-E factor (191 aa).

Residues 1-153 (MSEQLTDQVL…MAITLRELDG (153 aa)) are binds RNAP core. The tract at residues 25-92 (LVVRYQHKVA…KNYLVAQGRR (68 aa)) is sigma-70 factor domain-2. The Polymerase core binding motif lies at 48–61 (DVVQESFIKAYRAL). The tract at residues 129–180 (QIVFRTIESLPEDLRMAITLRELDGLSYEEIAAIMDCPVGTVRSRIFRAREA) is sigma-70 factor domain-4. The H-T-H motif DNA-binding region spans 156 to 175 (YEEIAAIMDCPVGTVRSRIF).

Belongs to the sigma-70 factor family. ECF subfamily. As to quaternary structure, interacts transiently with the RNAP catalytic core formed by RpoA, RpoB, RpoC and RpoZ (2 alpha, 1 beta, 1 beta' and 1 omega subunit) to form the RNAP holoenzyme that can initiate transcription. Interacts 1:1 with anti-sigma-E factor RseA which prevents binding to RNAP catalytic core.

It localises to the cytoplasm. Its activity is regulated as follows. ECF sigma-E is held in an inactive form by its cognate anti-sigma factor (RseA) until released by regulated intramembrane proteolysis (RIP). RIP occurs when an extracytoplasmic signal (periplasmic, acid or heat stress) triggers a concerted proteolytic cascade to transmit information and elicit cellular responses. In S.typhimurium there are 2 cascades, the heat shock response which depends on DegS and RseP, and acid response which depends only on RseP. The anti-sigma factor RseA is an inner membrane protein, binding sigma-E in the cytoplasm and RseB in the periplasm. RseA is first cut extracytoplasmically (site-1 protease, S1P, by DegS), then within the membrane itself (site-2 protease, S2P, by RseP), while cytoplasmic proteases (predominantly ClpX-ClpP) finish degrading the regulatory protein, liberating sigma-E. Degradation of RseA requires 2 signals to activate DegS; an outer membrane protein (OMP) signal activates DegS, while an LPS signal causes release of RseB from RseA, freeing RseA to be cleaved. OMP stress can be abrogated by overexpression of the sRNA rybB. Its function is as follows. Sigma factors are initiation factors that promote the attachment of RNA polymerase (RNAP) to specific initiation sites and are then released. Extracytoplasmic function (ECF) sigma-E controls the envelope stress response, responding to periplasmic protein stress, increased levels of periplasmic lipopolysaccharide (LPS) as well as acid stress, heat shock and oxidative stress; it controls protein processing in the extracytoplasmic compartment. This Salmonella typhimurium (strain 14028s / SGSC 2262) protein is ECF RNA polymerase sigma-E factor (rpoE).